A 119-amino-acid chain; its full sequence is Large ribosomal subunit protein bL20 (119 aa).

The protein belongs to the bacterial ribosomal protein bL20 family.

Functionally, binds directly to 23S ribosomal RNA and is necessary for the in vitro assembly process of the 50S ribosomal subunit. It is not involved in the protein synthesizing functions of that subunit. This is Large ribosomal subunit protein bL20 from Xylella fastidiosa (strain 9a5c).